The chain runs to 779 residues: Neutral ceramidase 1 (779 aa).

Serine 350 serves as the catalytic Nucleophile. 3 N-linked (GlcNAc...) asparagine glycosylation sites follow: asparagine 368, asparagine 432, and asparagine 667.

It belongs to the neutral ceramidase family. In terms of tissue distribution, mostly expressed in stems, leaves, roots and siliques, and, to a lower extent, in flowers.

It localises to the secreted. The protein localises to the endoplasmic reticulum. Its subcellular location is the golgi apparatus. The catalysed reaction is an N-acylsphing-4-enine + H2O = sphing-4-enine + a fatty acid. Hydrolyzes the sphingolipid ceramide into sphingosine and free fatty acid. Regulates sphingolipid homeostasis. Promotes oxidative stress resistance. The chain is Neutral ceramidase 1 from Arabidopsis thaliana (Mouse-ear cress).